The chain runs to 498 residues: Glycerol kinase (498 aa).

Residue T12 coordinates ADP. T12, T13, and S14 together coordinate ATP. T12 is a binding site for sn-glycerol 3-phosphate. R16 serves as a coordination point for ADP. Sn-glycerol 3-phosphate contacts are provided by R82, E83, Y134, and D241. 5 residues coordinate glycerol: R82, E83, Y134, D241, and Q242. 2 residues coordinate ADP: T263 and G310. ATP-binding residues include T263, G310, Q314, and G411. 2 residues coordinate ADP: G411 and N415.

Belongs to the FGGY kinase family.

It catalyses the reaction glycerol + ATP = sn-glycerol 3-phosphate + ADP + H(+). It participates in polyol metabolism; glycerol degradation via glycerol kinase pathway; sn-glycerol 3-phosphate from glycerol: step 1/1. With respect to regulation, inhibited by fructose 1,6-bisphosphate (FBP). Functionally, key enzyme in the regulation of glycerol uptake and metabolism. Catalyzes the phosphorylation of glycerol to yield sn-glycerol 3-phosphate. This is Glycerol kinase from Herminiimonas arsenicoxydans.